We begin with the raw amino-acid sequence, 339 residues long: Adenylosuccinate synthetase (339 aa).

Residues 12–18 and 42–44 each bind GTP; these read GDEGKGS and GHS. Residue Asp-13 is the Proton acceptor of the active site. Asp-13 and Gly-42 together coordinate Mg(2+). IMP contacts are provided by residues 13–16, 40–43, Thr-127, Arg-141, Gln-179, Thr-194, and Arg-256; these read DEGK and NAGH. His-43 acts as the Proton donor in catalysis. 252-258 contacts substrate; that stretch reads TVTGRRR. Residues Arg-258, 284-286, and 324-326 each bind GTP; these read MLD and KTG.

Belongs to the adenylosuccinate synthetase family. In terms of assembly, homodimer. It depends on Mg(2+) as a cofactor.

The protein resides in the cytoplasm. The catalysed reaction is IMP + L-aspartate + GTP = N(6)-(1,2-dicarboxyethyl)-AMP + GDP + phosphate + 2 H(+). Its pathway is purine metabolism; AMP biosynthesis via de novo pathway; AMP from IMP: step 1/2. Functionally, plays an important role in the de novo pathway of purine nucleotide biosynthesis. Catalyzes the first committed step in the biosynthesis of AMP from IMP. This chain is Adenylosuccinate synthetase, found in Thermococcus sibiricus (strain DSM 12597 / MM 739).